Reading from the N-terminus, the 218-residue chain is Octanoyltransferase (218 aa).

The BPL/LPL catalytic domain occupies R31 to E206. Residues R70–H77, S137–G139, and G150–A152 each bind substrate. Residue C168 is the Acyl-thioester intermediate of the active site.

This sequence belongs to the LipB family.

It is found in the cytoplasm. It carries out the reaction octanoyl-[ACP] + L-lysyl-[protein] = N(6)-octanoyl-L-lysyl-[protein] + holo-[ACP] + H(+). Its pathway is protein modification; protein lipoylation via endogenous pathway; protein N(6)-(lipoyl)lysine from octanoyl-[acyl-carrier-protein]: step 1/2. Functionally, catalyzes the transfer of endogenously produced octanoic acid from octanoyl-acyl-carrier-protein onto the lipoyl domains of lipoate-dependent enzymes. Lipoyl-ACP can also act as a substrate although octanoyl-ACP is likely to be the physiological substrate. This chain is Octanoyltransferase, found in Pseudomonas savastanoi pv. phaseolicola (strain 1448A / Race 6) (Pseudomonas syringae pv. phaseolicola (strain 1448A / Race 6)).